Here is a 65-residue protein sequence, read N- to C-terminus: Protein translocase subunit SecE (65 aa).

Topologically, residues 1–27 (MEKLKEFLKGVRDELKRVVWPSRELVV) are cytoplasmic. Residues 28–59 (KATISVIIFSLAIGVYLWILDLTFTKIISFIL) form a helical membrane-spanning segment. The Periplasmic portion of the chain corresponds to 60-65 (SLRGSL).

It belongs to the SecE/SEC61-gamma family. As to quaternary structure, component of the Sec protein translocase complex. Heterotrimer consisting of SecY, SecE and SecG subunits. The heterotrimers can form oligomers, although 1 heterotrimer is thought to be able to translocate proteins. Interacts with SecDF, and other proteins may be involved. The channel interacts with SecA via subunit SecY.

The protein resides in the cell inner membrane. Essential subunit of the protein translocation channel SecYEG. Clamps together the 2 halves of SecY. May contact the channel plug during translocation. The sequence is that of Protein translocase subunit SecE from Aquifex aeolicus (strain VF5).